A 184-amino-acid polypeptide reads, in one-letter code: Tyrosine-protein kinase receptor Tie-1 (184 aa).

Positions 1 to 164 constitute a Protein kinase domain; the sequence is QLLQFAADVA…RMQEARKAYV (164 aa). Catalysis depends on Asp25, which acts as the Proton acceptor. Tyr53 is subject to Phosphotyrosine; by autocatalysis.

The protein belongs to the protein kinase superfamily. Tyr protein kinase family. Tie subfamily. As to quaternary structure, interacts with svep1. Expressed in most populations of endothelial cells in 24 hours embryos, including the endocardium.

The protein resides in the cell membrane. The catalysed reaction is L-tyrosyl-[protein] + ATP = O-phospho-L-tyrosyl-[protein] + ADP + H(+). Transmembrane tyrosine-protein kinase. Required for the formation of facial lymphatic structures and brain lymphatic endothelial cells. Also required for embryonic ventral and dorsal migration of parachordal lymphoblasts along the arterial intersegmental vessel. Plays a role in the embryonic formation of the dorsal longitudinal anastomotic vessel. This is Tyrosine-protein kinase receptor Tie-1 (tie1) from Danio rerio (Zebrafish).